The following is a 92-amino-acid chain: Small ribosomal subunit protein uS19c (92 aa).

It belongs to the universal ribosomal protein uS19 family.

It localises to the plastid. The protein resides in the chloroplast. Functionally, protein S19 forms a complex with S13 that binds strongly to the 16S ribosomal RNA. The chain is Small ribosomal subunit protein uS19c from Nymphaea alba (White water-lily).